The following is a 441-amino-acid chain: uncharacterized protein (441 aa).

This is an uncharacterized protein from Methanocaldococcus jannaschii (strain ATCC 43067 / DSM 2661 / JAL-1 / JCM 10045 / NBRC 100440) (Methanococcus jannaschii).